A 125-amino-acid polypeptide reads, in one-letter code: MGCICGHLQLLGCLRHCLNRNGGGTLVVAFAFTAFFSLLTILEVLSALNIFGGEGTLMNAFVLGTITATFAKGVVVRRDSYLFVASLLAAAFSVLMILVYMASGSFSYGIFGLVTVPYLVKKARK.

3 helical membrane-spanning segments follow: residues 20–42 (RNGG…LTIL), 57–76 (LMNA…GVVV), and 81–103 (YLFV…YMAS).

The protein localises to the cell membrane. This is an uncharacterized protein from Archaeoglobus fulgidus (strain ATCC 49558 / DSM 4304 / JCM 9628 / NBRC 100126 / VC-16).